A 179-amino-acid chain; its full sequence is Large ribosomal subunit protein uL6 (179 aa).

This sequence belongs to the universal ribosomal protein uL6 family. As to quaternary structure, part of the 50S ribosomal subunit.

Functionally, this protein binds to the 23S rRNA, and is important in its secondary structure. It is located near the subunit interface in the base of the L7/L12 stalk, and near the tRNA binding site of the peptidyltransferase center. This is Large ribosomal subunit protein uL6 from Streptomyces griseus subsp. griseus (strain JCM 4626 / CBS 651.72 / NBRC 13350 / KCC S-0626 / ISP 5235).